The chain runs to 241 residues: Pyridoxine 5'-phosphate synthase (241 aa).

Asn7 is a 3-amino-2-oxopropyl phosphate binding site. 9-10 (DH) is a binding site for 1-deoxy-D-xylulose 5-phosphate. Arg18 contacts 3-amino-2-oxopropyl phosphate. The active-site Proton acceptor is His43. Residues Arg45 and His50 each coordinate 1-deoxy-D-xylulose 5-phosphate. Glu70 functions as the Proton acceptor in the catalytic mechanism. Thr100 is a 1-deoxy-D-xylulose 5-phosphate binding site. His191 functions as the Proton donor in the catalytic mechanism. Residues Gly192 and 213 to 214 (GH) contribute to the 3-amino-2-oxopropyl phosphate site.

The protein belongs to the PNP synthase family. As to quaternary structure, homooctamer; tetramer of dimers.

It localises to the cytoplasm. The enzyme catalyses 3-amino-2-oxopropyl phosphate + 1-deoxy-D-xylulose 5-phosphate = pyridoxine 5'-phosphate + phosphate + 2 H2O + H(+). The protein operates within cofactor biosynthesis; pyridoxine 5'-phosphate biosynthesis; pyridoxine 5'-phosphate from D-erythrose 4-phosphate: step 5/5. Its function is as follows. Catalyzes the complicated ring closure reaction between the two acyclic compounds 1-deoxy-D-xylulose-5-phosphate (DXP) and 3-amino-2-oxopropyl phosphate (1-amino-acetone-3-phosphate or AAP) to form pyridoxine 5'-phosphate (PNP) and inorganic phosphate. The polypeptide is Pyridoxine 5'-phosphate synthase (Nitratidesulfovibrio vulgaris (strain ATCC 29579 / DSM 644 / CCUG 34227 / NCIMB 8303 / VKM B-1760 / Hildenborough) (Desulfovibrio vulgaris)).